The sequence spans 249 residues: Probable transcriptional regulatory protein OTT_1378 (249 aa).

This sequence belongs to the TACO1 family.

The protein localises to the cytoplasm. The chain is Probable transcriptional regulatory protein OTT_1378 from Orientia tsutsugamushi (strain Ikeda) (Rickettsia tsutsugamushi).